The sequence spans 2531 residues: Talin (2531 aa).

Residues arginine 87–lysine 401 form the FERM domain. Residues glycine 598–proline 621 are interaction with VIN1. Residues threonine 2287–histidine 2526 form the I/LWEQ domain. Residues alanine 2466 to glutamate 2485 form a disordered region.

In terms of assembly, interacts with VIN1 (vinculin); the interaction facilitates VIN1 binding to F-actin.

It localises to the cytoplasm. Its subcellular location is the cytoskeleton. The protein resides in the cell cortex. Probably involved in connections of major cytoskeletal structures to the plasma membrane. This is Talin from Oscarella pearsei (Sponge).